Consider the following 932-residue polypeptide: Chaperone protein ClpC3, chloroplastic (932 aa).

Residues 1-20 (MERTLLNPPPSLRSPACRTT) are disordered. Residues 1–48 (MERTLLNPPPSLRSPACRTTTATRIRPSSSMATMIPTPPPMRHARLVK) constitute a chloroplast transit peptide. Positions 99–240 (FDMFTDKAIK…RSEVIRMISD (142 aa)) constitute a Clp R domain. Repeat stretches follow at residues 102–167 (FTDK…AGRG) and 177–240 (FTPA…MISD). Residues 264–511 (LLEYGTNLTK…LVRLRNAQLP (248 aa)) are i. ATP is bound at residue 309–316 (GEPGVGKT). The UVR domain occupies 518-553 (EKKLKKIMAEKSEAIRSQDFEKAGALRGEEVELKSE). Positions 579–770 (VTEADVQHIV…LIIMTSNVGS (192 aa)) are II. Residue 653–660 (GPTGVGKS) coordinates ATP.

The protein belongs to the ClpA/ClpB family. ClpC subfamily.

The protein resides in the plastid. It localises to the chloroplast. Functionally, molecular chaperone that may interact with a ClpP-like protease involved in degradation of denatured proteins in the chloroplast. This Oryza sativa subsp. japonica (Rice) protein is Chaperone protein ClpC3, chloroplastic (CLPC3).